A 418-amino-acid polypeptide reads, in one-letter code: Gamma-glutamyl phosphate reductase (418 aa).

This sequence belongs to the gamma-glutamyl phosphate reductase family.

The protein localises to the cytoplasm. The enzyme catalyses L-glutamate 5-semialdehyde + phosphate + NADP(+) = L-glutamyl 5-phosphate + NADPH + H(+). The protein operates within amino-acid biosynthesis; L-proline biosynthesis; L-glutamate 5-semialdehyde from L-glutamate: step 2/2. Functionally, catalyzes the NADPH-dependent reduction of L-glutamate 5-phosphate into L-glutamate 5-semialdehyde and phosphate. The product spontaneously undergoes cyclization to form 1-pyrroline-5-carboxylate. The chain is Gamma-glutamyl phosphate reductase from Desulfotalea psychrophila (strain LSv54 / DSM 12343).